A 66-amino-acid chain; its full sequence is Neurotoxin BmK AGP-SYPU1 (66 aa).

Positions 2–64 constitute an LCN-type CS-alpha/beta domain; that stretch reads RDAYIAQNYN…KPIRIPGKCH (63 aa). Cystine bridges form between Cys-12–Cys-63, Cys-16–Cys-36, Cys-22–Cys-46, and Cys-26–Cys-48. The propeptide at 65–66 is removed by a carboxypeptidase; that stretch reads RR.

Expressed by the venom gland.

It is found in the secreted. Alpha toxins bind voltage-independently at site-3 of sodium channels (Nav) and inhibit the inactivation of the activated channels, thereby blocking neuronal transmission. This toxin has a strong analgesic effect when administered to mice by intraperitoneal injection. The sequence is that of Neurotoxin BmK AGP-SYPU1 from Olivierus martensii (Manchurian scorpion).